We begin with the raw amino-acid sequence, 274 residues long: MDWLYSLIYGIVEGITEFLPISSTGHLILTGNLLHVPWPKEVKDTFEVVIQGGAILAVLVYYWRDFLKIRHIGHDRGQQRLWLGVVLACIPAVILGVLFGDTIKAYLFRPSVVAWALIVGGVLMWLLESRKATPDTHDIENISAGKALAIGAAQCLALLWPGFSRSASSILGGMLLGLDRPTATKFSFYLGVPTLGGAALLDFIKSREILAQIGVVNVAIGAVTSFVVAYFAIGWLLRFVSTNNFKGFAVYRVVVGVLILVLIARGVLQNGSLA.

A run of 8 helical transmembrane segments spans residues 1 to 21 (MDWL…FLPI), 42 to 62 (VKDT…LVYY), 81 to 101 (LWLG…LFGD), 107 to 127 (LFRP…MWLL), 142 to 162 (ISAG…LWPG), 184 to 204 (TKFS…LDFI), 213 to 233 (IGVV…YFAI), and 248 to 268 (FAVY…RGVL).

Belongs to the UppP family.

The protein resides in the cell membrane. It catalyses the reaction di-trans,octa-cis-undecaprenyl diphosphate + H2O = di-trans,octa-cis-undecaprenyl phosphate + phosphate + H(+). Its function is as follows. Catalyzes the dephosphorylation of undecaprenyl diphosphate (UPP). Confers resistance to bacitracin. The chain is Undecaprenyl-diphosphatase from Deinococcus radiodurans (strain ATCC 13939 / DSM 20539 / JCM 16871 / CCUG 27074 / LMG 4051 / NBRC 15346 / NCIMB 9279 / VKM B-1422 / R1).